Reading from the N-terminus, the 30-residue chain is Nattererin-2 (30 aa).

In terms of tissue distribution, expressed by the skin glands.

It is found in the secreted. Functionally, probably has antibacterial activity. The chain is Nattererin-2 from Physalaemus nattereri (Cuyaba dwarf frog).